The chain runs to 285 residues: MFRRSLMFMISNNKNTNMVSSINTTNKVNNFSKIIILEGNISAGKTYLSSKLGDLLGYKVFLEPTATNPYLSLFYKEPSKYALIMQKWLLNQRYNTFLNALQYSLENEQGVILDRSVYSDWVFAENCRSEGLISAEGFKEYNSIRDRFLSNIPIPNVTLFLDVDPKQCLQRIQNRKRDCEQSIPLSYLSGLDNCYKKFLIEMKSKGSNVIILDWNNFGDINLVLNEINNDNFNNFNNSNNSKFNDVNYKKQQLISDIENEKNNLKEMKFFLNENNNNNNQEKIKS.

39–47 is an ATP binding site; sequence GNISAGKTY. Positions 63, 75, and 86 each coordinate substrate. Aspartate 114 (proton acceptor) is an active-site residue. Positions 115, 120, and 180 each coordinate substrate.

The protein belongs to the DCK/DGK family.

It is found in the cytoplasm. The catalysed reaction is 2'-deoxyguanosine + ATP = dGMP + ADP + H(+). Its function is as follows. Purine-specific deoxyribonucleoside kinase that phosphorylates preferentially deoxyguanosine, as part of the deoxyribonucleotide salvage pathway. The protein is Deoxyguanosine kinase (dgk) of Dictyostelium discoideum (Social amoeba).